Here is a 159-residue protein sequence, read N- to C-terminus: Crossover junction endodeoxyribonuclease RuvC (159 aa).

Active-site residues include Asp-7, Glu-67, and Asp-139. 3 residues coordinate Mg(2+): Asp-7, Glu-67, and Asp-139.

The protein belongs to the RuvC family. Homodimer which binds Holliday junction (HJ) DNA. The HJ becomes 2-fold symmetrical on binding to RuvC with unstacked arms; it has a different conformation from HJ DNA in complex with RuvA. In the full resolvosome a probable DNA-RuvA(4)-RuvB(12)-RuvC(2) complex forms which resolves the HJ. The cofactor is Mg(2+).

Its subcellular location is the cytoplasm. The catalysed reaction is Endonucleolytic cleavage at a junction such as a reciprocal single-stranded crossover between two homologous DNA duplexes (Holliday junction).. In terms of biological role, the RuvA-RuvB-RuvC complex processes Holliday junction (HJ) DNA during genetic recombination and DNA repair. Endonuclease that resolves HJ intermediates. Cleaves cruciform DNA by making single-stranded nicks across the HJ at symmetrical positions within the homologous arms, yielding a 5'-phosphate and a 3'-hydroxyl group; requires a central core of homology in the junction. The consensus cleavage sequence is 5'-(A/T)TT(C/G)-3'. Cleavage occurs on the 3'-side of the TT dinucleotide at the point of strand exchange. HJ branch migration catalyzed by RuvA-RuvB allows RuvC to scan DNA until it finds its consensus sequence, where it cleaves and resolves the cruciform DNA. This chain is Crossover junction endodeoxyribonuclease RuvC, found in Thermosynechococcus vestitus (strain NIES-2133 / IAM M-273 / BP-1).